The following is a 78-amino-acid chain: Acyl carrier protein (78 aa).

Positions 2-77 (SDTVERVKKI…DAVKFIDKAS (76 aa)) constitute a Carrier domain. Ser37 carries the O-(pantetheine 4'-phosphoryl)serine modification.

The protein belongs to the acyl carrier protein (ACP) family. 4'-phosphopantetheine is transferred from CoA to a specific serine of apo-ACP by AcpS. This modification is essential for activity because fatty acids are bound in thioester linkage to the sulfhydryl of the prosthetic group.

It localises to the cytoplasm. It participates in lipid metabolism; fatty acid biosynthesis. Functionally, carrier of the growing fatty acid chain in fatty acid biosynthesis. This Bartonella quintana (strain Toulouse) (Rochalimaea quintana) protein is Acyl carrier protein.